The following is a 94-amino-acid chain: uncharacterized protein (94 aa).

This is an uncharacterized protein from Narcissus mosaic virus (NMV).